Consider the following 349-residue polypeptide: Phosphoribosylformylglycinamidine cyclo-ligase (349 aa).

This sequence belongs to the AIR synthase family.

It localises to the cytoplasm. It carries out the reaction 2-formamido-N(1)-(5-O-phospho-beta-D-ribosyl)acetamidine + ATP = 5-amino-1-(5-phospho-beta-D-ribosyl)imidazole + ADP + phosphate + H(+). It participates in purine metabolism; IMP biosynthesis via de novo pathway; 5-amino-1-(5-phospho-D-ribosyl)imidazole from N(2)-formyl-N(1)-(5-phospho-D-ribosyl)glycinamide: step 2/2. The chain is Phosphoribosylformylglycinamidine cyclo-ligase from Lactobacillus helveticus (strain DPC 4571).